Here is a 347-residue protein sequence, read N- to C-terminus: Chlorophyll a/b light-harvesting protein PcbB (347 aa).

The next 6 helical transmembrane spans lie at 25–45 (GLWLAAHVAQASFIVLWAGAI), 64–84 (LILIPHLAALGIGVGAGGVVV), 91–111 (AIGAVHLISSFVFAFGAIFHV), 206–226 (LASGHAFIGVVLLSGGVWHIT), 247–267 (LSSALAGLSMLGFAAAYFSAV), and 308–328 (LCNVHFYLAFFVLQGHLWHAI).

Belongs to the PsbB/PsbC family. IsiA/Pcb subfamily. As to quaternary structure, the antenna complex consists of chlorophylls (a and b) and chlorophyll a/b binding proteins. Chlorophyll a is required as a cofactor. It depends on chlorophyll b as a cofactor.

The protein resides in the cellular thylakoid membrane. Its function is as follows. The antenna complex functions as a light receptor, it captures and delivers excitation energy to photosystems II and I. The Prochlorales pcb genes are not related to higher plant LHCs. This is Chlorophyll a/b light-harvesting protein PcbB (pcbB) from Prochlorothrix hollandica.